The chain runs to 101 residues: UPF0235 protein CJA_0091 (101 aa).

This sequence belongs to the UPF0235 family.

In Cellvibrio japonicus (strain Ueda107) (Pseudomonas fluorescens subsp. cellulosa), this protein is UPF0235 protein CJA_0091.